The sequence spans 161 residues: Cytochrome c-type biogenesis protein CcmE (161 aa).

The Cytoplasmic portion of the chain corresponds to 1 to 8 (MNPRRQKR). The chain crosses the membrane as a helical; Signal-anchor for type II membrane protein span at residues 9 to 29 (LGIILAILIGVSATIGLMIYA). Residues 30 to 161 (LNQNMDLFYT…SEEQKQGSGQ (132 aa)) lie on the Periplasmic side of the membrane. Heme-binding residues include His129 and Tyr133.

This sequence belongs to the CcmE/CycJ family.

It is found in the cell inner membrane. Heme chaperone required for the biogenesis of c-type cytochromes. Transiently binds heme delivered by CcmC and transfers the heme to apo-cytochromes in a process facilitated by CcmF and CcmH. In Vibrio vulnificus (strain CMCP6), this protein is Cytochrome c-type biogenesis protein CcmE.